A 1050-amino-acid polypeptide reads, in one-letter code: DNA ligase 4 (1050 aa).

A disordered region spans residues methionine 1–tyrosine 22. The ATP site is built by glutamate 329, lysine 331, leucine 332, arginine 336, glutamate 398, phenylalanine 438, glutamate 498, lysine 503, lysine 520, and lysine 522. The active-site N6-AMP-lysine intermediate is lysine 331. Glutamate 398 is a binding site for Mg(2+). Residue glutamate 498 participates in Mg(2+) binding. Basic and acidic residues predominate over residues glutamine 691–asparagine 702. Residues glutamine 691–arginine 711 are disordered. BRCT domains follow at residues alanine 742–lysine 840 and leucine 936–alanine 1049.

This sequence belongs to the ATP-dependent DNA ligase family. Mg(2+) is required as a cofactor.

It is found in the nucleus. The enzyme catalyses ATP + (deoxyribonucleotide)n-3'-hydroxyl + 5'-phospho-(deoxyribonucleotide)m = (deoxyribonucleotide)n+m + AMP + diphosphate.. Its function is as follows. DNA ligase involved in DNA non-homologous end joining (NHEJ); required for double-strand break (DSB) repair. The protein is DNA ligase 4 (mus-53) of Neurospora crassa (strain ATCC 24698 / 74-OR23-1A / CBS 708.71 / DSM 1257 / FGSC 987).